The following is a 429-amino-acid chain: Kynureninase (429 aa).

Pyridoxal 5'-phosphate-binding positions include leucine 109, threonine 110, 137–140, aspartate 222, histidine 225, and tyrosine 247; that span reads FPSD. The residue at position 248 (lysine 248) is an N6-(pyridoxal phosphate)lysine. Pyridoxal 5'-phosphate-binding residues include tryptophan 278 and asparagine 306.

Belongs to the kynureninase family. In terms of assembly, homodimer. Pyridoxal 5'-phosphate is required as a cofactor.

It catalyses the reaction L-kynurenine + H2O = anthranilate + L-alanine + H(+). The catalysed reaction is 3-hydroxy-L-kynurenine + H2O = 3-hydroxyanthranilate + L-alanine + H(+). It participates in amino-acid degradation; L-kynurenine degradation; L-alanine and anthranilate from L-kynurenine: step 1/1. It functions in the pathway cofactor biosynthesis; NAD(+) biosynthesis; quinolinate from L-kynurenine: step 2/3. Its function is as follows. Catalyzes the cleavage of L-kynurenine (L-Kyn) and L-3-hydroxykynurenine (L-3OHKyn) into anthranilic acid (AA) and 3-hydroxyanthranilic acid (3-OHAA), respectively. This Salinispora tropica (strain ATCC BAA-916 / DSM 44818 / JCM 13857 / NBRC 105044 / CNB-440) protein is Kynureninase.